Here is a 388-residue protein sequence, read N- to C-terminus: Chorismate synthase (388 aa).

Residues Arg39 and Arg45 each coordinate NADP(+). The tract at residues 95 to 115 (EKQKKIRRVSKPRPGHADLVG) is disordered. Basic residues predominate over residues 98-108 (KKIRRVSKPRP). FMN is bound by residues 130–132 (RSS), 251–252 (NA), Gly296, 311–315 (KPIPT), and Arg337.

It belongs to the chorismate synthase family. As to quaternary structure, homotetramer. Requires FMNH2 as cofactor.

It carries out the reaction 5-O-(1-carboxyvinyl)-3-phosphoshikimate = chorismate + phosphate. It functions in the pathway metabolic intermediate biosynthesis; chorismate biosynthesis; chorismate from D-erythrose 4-phosphate and phosphoenolpyruvate: step 7/7. In terms of biological role, catalyzes the anti-1,4-elimination of the C-3 phosphate and the C-6 proR hydrogen from 5-enolpyruvylshikimate-3-phosphate (EPSP) to yield chorismate, which is the branch point compound that serves as the starting substrate for the three terminal pathways of aromatic amino acid biosynthesis. This reaction introduces a second double bond into the aromatic ring system. This chain is Chorismate synthase, found in Enterococcus faecalis (strain ATCC 700802 / V583).